The following is a 333-amino-acid chain: Ribosomal RNA small subunit methyltransferase C (333 aa).

It belongs to the methyltransferase superfamily. RsmC family. As to quaternary structure, monomer.

Its subcellular location is the cytoplasm. It catalyses the reaction guanosine(1207) in 16S rRNA + S-adenosyl-L-methionine = N(2)-methylguanosine(1207) in 16S rRNA + S-adenosyl-L-homocysteine + H(+). Functionally, specifically methylates the guanine in position 1207 of 16S rRNA in the 30S particle. In Mannheimia succiniciproducens (strain KCTC 0769BP / MBEL55E), this protein is Ribosomal RNA small subunit methyltransferase C.